The sequence spans 294 residues: 33 kDa chaperonin (294 aa).

2 disulfides stabilise this stretch: Cys239-Cys241 and Cys272-Cys275.

The protein belongs to the HSP33 family. Post-translationally, under oxidizing conditions two disulfide bonds are formed involving the reactive cysteines. Under reducing conditions zinc is bound to the reactive cysteines and the protein is inactive.

It localises to the cytoplasm. Its function is as follows. Redox regulated molecular chaperone. Protects both thermally unfolding and oxidatively damaged proteins from irreversible aggregation. Plays an important role in the bacterial defense system toward oxidative stress. This is 33 kDa chaperonin from Listeria monocytogenes serotype 4a (strain HCC23).